We begin with the raw amino-acid sequence, 306 residues long: Elongation factor Ts (306 aa).

The interval 80–83 is involved in Mg(2+) ion dislocation from EF-Tu; the sequence is TDFV.

The protein belongs to the EF-Ts family.

It localises to the cytoplasm. In terms of biological role, associates with the EF-Tu.GDP complex and induces the exchange of GDP to GTP. It remains bound to the aminoacyl-tRNA.EF-Tu.GTP complex up to the GTP hydrolysis stage on the ribosome. The sequence is that of Elongation factor Ts from Clostridium kluyveri (strain NBRC 12016).